The sequence spans 283 residues: MPELPEVEVVRRGLHAHVVGKTIGAVRVHHPRAVRRHEAGPADLTARLLGARITGTDRRGKYLWLLLDGCDTALVVHLGMSGQMLLGAVPRAEHVRISALLDDGTVLSFADQRTFGGWMLADLLEVDGSILPRPVAHLARDPLDPRFDAAAVVKVLRRKHSEIKRQLLDQQVVSGIGNIYADEALWRAKVHGARIAATMTGRQLTAVLDAAAEVMRDALAQGGTSFDSLYVNVNGESGYFDRSLDAYGREGESCRRCGAVMRREKFMNRSSFYCPKCQPRPRL.

Pro2 (schiff-base intermediate with DNA) is an active-site residue. Glu3 acts as the Proton donor in catalysis. Catalysis depends on Lys61, which acts as the Proton donor; for beta-elimination activity. DNA contacts are provided by His94, Arg113, and Lys159. Residues 245 to 279 (DAYGREGESCRRCGAVMRREKFMNRSSFYCPKCQP) form an FPG-type zinc finger. The active-site Proton donor; for delta-elimination activity is Arg269.

The protein belongs to the FPG family. In terms of assembly, monomer. It depends on Zn(2+) as a cofactor.

The catalysed reaction is Hydrolysis of DNA containing ring-opened 7-methylguanine residues, releasing 2,6-diamino-4-hydroxy-5-(N-methyl)formamidopyrimidine.. It catalyses the reaction 2'-deoxyribonucleotide-(2'-deoxyribose 5'-phosphate)-2'-deoxyribonucleotide-DNA = a 3'-end 2'-deoxyribonucleotide-(2,3-dehydro-2,3-deoxyribose 5'-phosphate)-DNA + a 5'-end 5'-phospho-2'-deoxyribonucleoside-DNA + H(+). Functionally, involved in base excision repair of DNA damaged by oxidation or by mutagenic agents. Acts as a DNA glycosylase that recognizes and removes damaged bases. Has a preference for oxidized purines, such as 7,8-dihydro-8-oxoguanine (8-oxoG). Has AP (apurinic/apyrimidinic) lyase activity and introduces nicks in the DNA strand. Cleaves the DNA backbone by beta-delta elimination to generate a single-strand break at the site of the removed base with both 3'- and 5'-phosphates. In Mycolicibacterium paratuberculosis (strain ATCC BAA-968 / K-10) (Mycobacterium paratuberculosis), this protein is Formamidopyrimidine-DNA glycosylase.